Reading from the N-terminus, the 752-residue chain is MAP/microtubule affinity-regulating kinase 4 (752 aa).

The tract at residues 1–36 (MSSRTALAPGNDRNSDTHGTLGSGRSSDKGPSWSSR) is disordered. Residues 59–310 (YRLLRTIGKG…LEQIMKDKWI (252 aa)) form the Protein kinase domain. ATP contacts are provided by residues 65–73 (IGKGNFAKV) and Lys-88. The active-site Proton acceptor is Asp-181. At Thr-214 the chain carries Phosphothreonine; by LKB1. The 45-residue stretch at 324–368 (EPEEDFGDTKRIEVMVGMGYTREEIKEALTNQKYNEVTATYLLLG) folds into the UBA domain. The disordered stretch occupies residues 385–615 (ARVRAPSDTT…SGRPRPTTNL (231 aa)). Residues 391-406 (SDTTNGTSSSKGSSHN) show a composition bias toward low complexity. A phosphoserine mark is found at Ser-423 and Ser-543. Over residues 544 to 553 (PSSHSLAPPS) the composition is skewed to low complexity. The KA1 domain occupies 703–752 (AGGPEPLSHFEVEVCQLPRPGLRGVLFRRVAGTALAFRTLVTRISNDLEL).

This sequence belongs to the protein kinase superfamily. CAMK Ser/Thr protein kinase family. SNF1 subfamily. Interacts with MAPT/TAU. Interacts with gamma-tubulin. Interacts with ODF2. Interacts with USP9X. Interacts with YWHAQ. Interacts with NLRP3; promoting NLRP3 recruitment to microtubule organizing center (MTOC). The cofactor is Mg(2+). In terms of processing, ubiquitinated with 'Lys-29'- and 'Lys-33'-linked polyubiquitins which appear to impede LKB1-mediated phosphorylation. Deubiquitinated by USP9X. Phosphorylated at Thr-214 by STK11/LKB1 in complex with STE20-related adapter-alpha (STRADA) pseudo kinase and CAB39. Phosphorylated throughout the cell cycle. Isoform 1 and isoform 2 show similar expression patterns in the central nervous system and are present in the same subsets of neurons including pyramidal and non-pyramidal neurons in the cerebral cortex and hippocampus, cerebellar Purkinje cells, and interneurons and motor neurons in the spinal cord but not in glial cells (at protein level). Isoform 2 is the major isoform in brain and cerebellum. Also expressed in spleen, liver, small intestine, colon, kidney, tongue, testis and lung. Isoform 1 and isoform 2 are expressed at similar levels in heart.

It localises to the cytoplasm. Its subcellular location is the cytoskeleton. The protein resides in the microtubule organizing center. It is found in the centrosome. The protein localises to the cilium axoneme. It localises to the cilium basal body. Its subcellular location is the cell projection. The protein resides in the dendrite. The enzyme catalyses L-seryl-[protein] + ATP = O-phospho-L-seryl-[protein] + ADP + H(+). It carries out the reaction L-threonyl-[protein] + ATP = O-phospho-L-threonyl-[protein] + ADP + H(+). With respect to regulation, activated by phosphorylation on Thr-214. Serine/threonine-protein kinase. Phosphorylates the microtubule-associated protein MAPT/TAU. Also phosphorylates the microtubule-associated proteins MAP2 and MAP4. Involved in regulation of the microtubule network, causing reorganization of microtubules into bundles. Required for the initiation of axoneme extension during cilium assembly. Regulates the centrosomal location of ODF2 and phosphorylates ODF2 in vitro. Plays a role in cell cycle progression, specifically in the G1/S checkpoint. Reduces neuronal cell survival. Plays a role in energy homeostasis by regulating satiety and metabolic rate. Promotes adipogenesis by activating JNK1 and inhibiting the p38MAPK pathway, and triggers apoptosis by activating the JNK1 pathway. Phosphorylates mTORC1 complex member RPTOR and acts as a negative regulator of the mTORC1 complex, probably due to disruption of the interaction between phosphorylated RPTOR and the RRAGA/RRAGC heterodimer which is required for mTORC1 activation. Involved in NLRP3 positioning along microtubules by mediating NLRP3 recruitment to microtubule organizing center (MTOC) upon inflammasome activation. This chain is MAP/microtubule affinity-regulating kinase 4, found in Mus musculus (Mouse).